The following is a 337-amino-acid chain: m7GpppX diphosphatase (337 aa).

The tract at residues 1–35 (MADAAPQLGKRKRELDVEEAHAASTEEKEAGVGNG) is disordered. Position 2 is an N-acetylalanine (Ala2). A nuclear localization signal (NLS) motif is present at residues 10–13 (KRKR). Residues 13 to 30 (RELDVEEAHAASTEEKEA) show a composition bias toward basic and acidic residues. Residues Ser24 and Ser101 each carry the phosphoserine modification. N6-acetyllysine is present on residues Lys138 and Lys142. Positions 142–154 (KYLRQDLRLIRET) match the nuclear export sequence (NES) motif. Substrate is bound by residues Trp175, Glu185, Asp205, Lys207, and 268 to 279 (HYLPSYYHLHVH). The Histidine triad motif signature appears at 275 to 279 (HLHVH). Catalysis depends on His277, which acts as the Nucleophile.

The protein belongs to the HIT family. Homodimer. Associates with components of the exosome multienzyme ribonuclease complex, such as EXOSC3 and EXOSC4. Interacts with NDOR1. As to expression, detected in liver, brain, kidney, testis and prostate.

Its subcellular location is the cytoplasm. The protein resides in the nucleus. It carries out the reaction a 5'-end (N(7)-methyl 5'-triphosphoguanosine)-ribonucleoside in mRNA + H2O = N(7)-methyl-GMP + a 5'-end diphospho-ribonucleoside in mRNA + 2 H(+). The hydrolytic product 7-methylguanosine diphosphate (m7GDP) efficiently inhibits the decapping scavenger activity and acts as a competitive inhibitor in vitro. Inhibited by 2,4-diaminoquinazoline. Its function is as follows. Decapping scavenger enzyme that catalyzes the cleavage of a residual cap structure following the degradation of mRNAs by the 3'-&gt;5' exosome-mediated mRNA decay pathway. Hydrolyzes cap analog structures like 7-methylguanosine nucleoside triphosphate (m7GpppG) with up to 10 nucleotide substrates (small capped oligoribonucleotides) and specifically releases 5'-phosphorylated RNA fragments and 7-methylguanosine monophosphate (m7GMP). Cleaves cap analog structures like tri-methyl guanosine nucleoside triphosphate (m3(2,2,7)GpppG) with very poor efficiency. Does not hydrolyze unmethylated cap analog (GpppG) and shows no decapping activity on intact m7GpppG-capped mRNA molecules longer than 25 nucleotides. Does not hydrolyze 7-methylguanosine diphosphate (m7GDP) to m7GMP. May also play a role in the 5'-&gt;3 mRNA decay pathway; m7GDP, the downstream product released by the 5'-&gt;3' mRNA mediated decapping activity, may be also converted by DCPS to m7GMP. Binds to m7GpppG and strongly to m7GDP. Plays a role in first intron splicing of pre-mRNAs. Inhibits activation-induced cell death. The protein is m7GpppX diphosphatase (DCPS) of Homo sapiens (Human).